An 81-amino-acid polypeptide reads, in one-letter code: Putative snRNP Sm-like protein (81 aa).

The Sm domain occupies 13 to 81; it reads RPLDALGNSL…RGDNIVYISP (69 aa).

The protein belongs to the snRNP Sm proteins family.

The polypeptide is Putative snRNP Sm-like protein (Methanothermobacter thermautotrophicus (strain ATCC 29096 / DSM 1053 / JCM 10044 / NBRC 100330 / Delta H) (Methanobacterium thermoautotrophicum)).